Consider the following 142-residue polypeptide: Large ribosomal subunit protein bL17 (142 aa).

It belongs to the bacterial ribosomal protein bL17 family. Part of the 50S ribosomal subunit. Contacts protein L32.

The sequence is that of Large ribosomal subunit protein bL17 from Chlamydia pneumoniae (Chlamydophila pneumoniae).